The sequence spans 308 residues: Exosporium protein A (308 aa).

The protein resides in the spore wall. The chain is Exosporium protein A from Clostridium sporogenes (strain ATCC 15579).